The chain runs to 1492 residues: DNA polymerase alpha catalytic subunit (1492 aa).

Disordered regions lie at residues 34 to 112, 162 to 195, and 210 to 234; these read DFIV…VEQS, SVTL…DVNP, and ANSY…EMAN. Positions 42-55 are enriched in basic and acidic residues; it reads YGYRDHGGEIWDRD. The span at 93 to 105 shows a compositional bias: polar residues; it reads NAASTNPSAQQKP. A compositionally biased stretch (basic and acidic residues) spans 166-178; the sequence is ESREEQERRRQSE. 2 stretches are compositionally biased toward polar residues: residues 184–194 and 210–224; these read ANIGQNQSDVN and ANSY…SVSK. Zn(2+) contacts are provided by Cys1314, Cys1317, Cys1341, Cys1344, Cys1375, Cys1380, Cys1393, and Cys1398. Residues 1314–1344 form a CysA-type zinc finger; the sequence is CPHCAHNYHFPGILVPSSNNTELTGLACVKC. Positions 1375–1398 match the CysB motif motif; it reads CKEPQCGMKTNQLLLNNKCIVKGC.

It belongs to the DNA polymerase type-B family.

It is found in the nucleus. The enzyme catalyses DNA(n) + a 2'-deoxyribonucleoside 5'-triphosphate = DNA(n+1) + diphosphate. In terms of biological role, polymerase alpha in a complex with DNA primase is a replicative polymerase. The chain is DNA polymerase alpha catalytic subunit from Sterkiella nova (Ciliate).